The chain runs to 556 residues: Butanoate--CoA ligase AAE1 (556 aa).

Positions 554-556 (SKL) match the Microbody targeting signal motif.

The protein belongs to the ATP-dependent AMP-binding enzyme family. In terms of tissue distribution, expressed in roots, leaves, stems, flowers and developing seeds.

The protein resides in the peroxisome. The enzyme catalyses butanoate + ATP + CoA = butanoyl-CoA + AMP + diphosphate. The catalysed reaction is hexanoate + ATP + CoA = hexanoyl-CoA + AMP + diphosphate. It catalyses the reaction pentanoate + ATP + CoA = pentanoyl-CoA + AMP + diphosphate. It carries out the reaction 4-methylpentanoate + ATP + CoA = 4-methylpentanoyl-CoA + AMP + diphosphate. Functionally, catalyzes the ligation of CoA on butanoate to produce butanoyl-CoA. Can also use hexanoate, pentanoate and 4-methylpentanoate as substrates with a lower efficiency. The sequence is that of Butanoate--CoA ligase AAE1 from Arabidopsis thaliana (Mouse-ear cress).